The chain runs to 71 residues: MKQGIHPNYREVNVTCSCGNKFVTKSAMEKENFNIEVCSLCHPFYTGTQKIVDTTGRVDKFNNKFGNLFKR.

Zn(2+) contacts are provided by cysteine 16, cysteine 18, cysteine 38, and cysteine 41.

This sequence belongs to the bacterial ribosomal protein bL31 family. Type A subfamily. Part of the 50S ribosomal subunit. Zn(2+) serves as cofactor.

Functionally, binds the 23S rRNA. The chain is Large ribosomal subunit protein bL31 from Neisseria gonorrhoeae (strain ATCC 700825 / FA 1090).